Here is a 224-residue protein sequence, read N- to C-terminus: Viral late gene transcription factor 3 (224 aa).

Belongs to the orthopoxvirus VLTF-3/OPG127 family. Interacts with the late transcription elongation factor VLTF-4/OPG110. Interacts with the late transcription factors VLTF-1/OPG093.

Its function is as follows. Acts with RNA polymerase to initiate transcription from late gene promoters. This Monkeypox virus protein is Viral late gene transcription factor 3 (OPG127).